The sequence spans 483 residues: tRNA sulfurtransferase (483 aa).

The 105-residue stretch at 62 to 166 folds into the THUMP domain; sequence PEICDALTRI…QDKLILVKAR (105 aa). ATP-binding positions include 184-185, lysine 266, glycine 288, and glutamine 297; that span reads LI. The cysteines at positions 345 and 457 are disulfide-linked. A Rhodanese domain is found at 405–483; sequence LADTDVLLDI…GYTNVKVYRP (79 aa). Cysteine 457 (cysteine persulfide intermediate) is an active-site residue.

This sequence belongs to the ThiI family.

Its subcellular location is the cytoplasm. It catalyses the reaction [ThiI sulfur-carrier protein]-S-sulfanyl-L-cysteine + a uridine in tRNA + 2 reduced [2Fe-2S]-[ferredoxin] + ATP + H(+) = [ThiI sulfur-carrier protein]-L-cysteine + a 4-thiouridine in tRNA + 2 oxidized [2Fe-2S]-[ferredoxin] + AMP + diphosphate. The catalysed reaction is [ThiS sulfur-carrier protein]-C-terminal Gly-Gly-AMP + S-sulfanyl-L-cysteinyl-[cysteine desulfurase] + AH2 = [ThiS sulfur-carrier protein]-C-terminal-Gly-aminoethanethioate + L-cysteinyl-[cysteine desulfurase] + A + AMP + 2 H(+). It functions in the pathway cofactor biosynthesis; thiamine diphosphate biosynthesis. In terms of biological role, catalyzes the ATP-dependent transfer of a sulfur to tRNA to produce 4-thiouridine in position 8 of tRNAs, which functions as a near-UV photosensor. Also catalyzes the transfer of sulfur to the sulfur carrier protein ThiS, forming ThiS-thiocarboxylate. This is a step in the synthesis of thiazole, in the thiamine biosynthesis pathway. The sulfur is donated as persulfide by IscS. The protein is tRNA sulfurtransferase of Yersinia pseudotuberculosis serotype O:1b (strain IP 31758).